The following is a 583-amino-acid chain: Threonine--tRNA ligase (583 aa).

Positions 185–478 (DHRKLGRELN…LVEHYGGAFP (294 aa)) are catalytic. Residues Cys-278, His-329, and His-455 each coordinate Zn(2+).

Belongs to the class-II aminoacyl-tRNA synthetase family. In terms of assembly, homodimer. The cofactor is Zn(2+).

It is found in the cytoplasm. The catalysed reaction is tRNA(Thr) + L-threonine + ATP = L-threonyl-tRNA(Thr) + AMP + diphosphate + H(+). Functionally, catalyzes the attachment of threonine to tRNA(Thr) in a two-step reaction: L-threonine is first activated by ATP to form Thr-AMP and then transferred to the acceptor end of tRNA(Thr). Also edits incorrectly charged L-seryl-tRNA(Thr). The polypeptide is Threonine--tRNA ligase (Borrelia recurrentis (strain A1)).